Reading from the N-terminus, the 692-residue chain is Methionine--tRNA ligase (692 aa).

The 'HIGH' region motif lies at 12-22; the sequence is PYANGSFHIGH. Zn(2+) is bound by residues cysteine 143, cysteine 146, cysteine 156, and cysteine 159. The 'KMSKS' region motif lies at 341–345; that stretch reads KMSKS. ATP is bound at residue lysine 344. Residues 586-692 form the tRNA-binding domain; that stretch reads DFAKIDLRIA…PGAQPGMRVR (107 aa).

Belongs to the class-I aminoacyl-tRNA synthetase family. MetG type 1 subfamily. In terms of assembly, homodimer. The cofactor is Zn(2+).

It is found in the cytoplasm. The catalysed reaction is tRNA(Met) + L-methionine + ATP = L-methionyl-tRNA(Met) + AMP + diphosphate. Is required not only for elongation of protein synthesis but also for the initiation of all mRNA translation through initiator tRNA(fMet) aminoacylation. The protein is Methionine--tRNA ligase of Bordetella parapertussis (strain 12822 / ATCC BAA-587 / NCTC 13253).